Here is a 255-residue protein sequence, read N- to C-terminus: HLA class II histocompatibility antigen, DQ alpha 2 chain (255 aa).

The first 23 residues, 1-23 (MILNKALLLGALALTAVMSPCGG), serve as a signal peptide directing secretion. Residues 24–110 (EDIVADHVAS…RQSNSTAATN (87 aa)) are alpha-1. Residues 24-217 (EDIVADHVAS…IPAPMSELTE (194 aa)) are Extracellular-facing. N-linked (GlcNAc...) asparagine glycosylation is found at asparagine 104 and asparagine 144. The alpha-2 stretch occupies residues 111 to 204 (EVPEVTVFSK…GLDEPLLKHW (94 aa)). The Ig-like C1-type domain occupies 113–205 (PEVTVFSKFP…LDEPLLKHWE (93 aa)). Cysteine 133 and cysteine 189 are disulfide-bonded. The connecting peptide stretch occupies residues 205 to 217 (EPEIPAPMSELTE). A helical membrane pass occupies residues 218–240 (TLVCALGLSVGLMGIVVGTVFII). Topologically, residues 241-255 (QGLRSVGASRHQGLL) are cytoplasmic.

This sequence belongs to the MHC class II family. As to quaternary structure, heterodimer of an alpha and a beta subunit; also referred as MHC class II molecule. Dimer formation with HLA-DQB2, but not with HLA-DQB1, is required for efficient exit from the endoplasmic reticulum (ER). In the ER, forms a heterononamer; 3 MHC class II molecules bind to a CD74 homotrimer (also known as invariant chain or HLA class II histocompatibility antigen gamma chain). In the endosomal/lysosomal system; CD74 undergoes sequential degradation by various proteases; leaving a small fragment termed CLIP on each MHC class II molecule. MHC class II molecule interacts with HLA_DM, and HLA_DO in B-cells, in order to release CLIP and facilitate the binding of antigenic peptides. Association with HLA-DMA also occurs in skin Langerhans cells, in post-Golgi compartments. Restricted to skin Langerhans cells, although some expression at low levels may occur at the surface of B lymphoblastoid cells.

Its subcellular location is the cell membrane. The protein resides in the endoplasmic reticulum membrane. It is found in the golgi apparatus. It localises to the trans-Golgi network membrane. The protein localises to the endosome membrane. Its subcellular location is the lysosome membrane. Its function is as follows. Binds peptides derived from antigens that access the endocytic route of antigen presenting cells (APC) and presents them on the cell surface for recognition by the CD4 T-cells. The peptide binding cleft accommodates peptides of 10-30 residues. The peptides presented by MHC class II molecules are generated mostly by degradation of proteins that access the endocytic route, where they are processed by lysosomal proteases and other hydrolases. Exogenous antigens that have been endocytosed by the APC are thus readily available for presentation via MHC II molecules, and for this reason this antigen presentation pathway is usually referred to as exogenous. As membrane proteins on their way to degradation in lysosomes as part of their normal turn-over are also contained in the endosomal/lysosomal compartments, exogenous antigens must compete with those derived from endogenous components. Autophagy is also a source of endogenous peptides, autophagosomes constitutively fuse with MHC class II loading compartments. In addition to APCs, other cells of the gastrointestinal tract, such as epithelial cells, express MHC class II molecules and CD74 and act as APCs, which is an unusual trait of the GI tract. To produce a MHC class II molecule that presents an antigen, three MHC class II molecules (heterodimers of an alpha and a beta chain) associate with a CD74 trimer in the ER to form a heterononamer. Soon after the entry of this complex into the endosomal/lysosomal system where antigen processing occurs, CD74 undergoes a sequential degradation by various proteases, including CTSS and CTSL, leaving a small fragment termed CLIP (class-II-associated invariant chain peptide). The removal of CLIP is facilitated by HLA-DM via direct binding to the alpha-beta-CLIP complex so that CLIP is released. HLA-DM stabilizes MHC class II molecules until primary high affinity antigenic peptides are bound. The MHC II molecule bound to a peptide is then transported to the cell membrane surface. In B-cells, the interaction between HLA-DM and MHC class II molecules is regulated by HLA-DO. Primary dendritic cells (DCs) also to express HLA-DO. Lysosomal microenvironment has been implicated in the regulation of antigen loading into MHC II molecules, increased acidification produces increased proteolysis and efficient peptide loading. The polypeptide is HLA class II histocompatibility antigen, DQ alpha 2 chain (HLA-DQA2) (Homo sapiens (Human)).